The following is a 106-amino-acid chain: Probable glutaredoxin (106 aa).

One can recognise a Glutaredoxin domain in the interval 8 to 106 (IVQKITGADP…AKYLDVQFTQ (99 aa)). Cysteines 28 and 31 form a disulfide.

It belongs to the glutaredoxin family.

The protein resides in the virion. In Acanthamoeba polyphaga mimivirus (APMV), this protein is Probable glutaredoxin.